The chain runs to 288 residues: Elongation factor Ts (288 aa).

Positions Thr-82–Val-85 are involved in Mg(2+) ion dislocation from EF-Tu.

The protein belongs to the EF-Ts family.

It is found in the cytoplasm. In terms of biological role, associates with the EF-Tu.GDP complex and induces the exchange of GDP to GTP. It remains bound to the aminoacyl-tRNA.EF-Tu.GTP complex up to the GTP hydrolysis stage on the ribosome. The protein is Elongation factor Ts of Chlorobium phaeobacteroides (strain BS1).